A 275-amino-acid chain; its full sequence is Methylglyoxal reductase DkgA (275 aa).

Tyr-51 functions as the Proton donor in the catalytic mechanism. His-107 serves as a coordination point for substrate. Residue 187-241 participates in NADP(+) binding; sequence SPLAQGGKGVFDQKVIRDLADKYGKTPAQIVIRWHLDSGLVVIPKSVTPSRIAEN.

The protein belongs to the aldo/keto reductase family. In terms of assembly, monomer.

The protein resides in the cytoplasm. It carries out the reaction hydroxyacetone + NADP(+) = methylglyoxal + NADPH + H(+). Its function is as follows. Aldo-keto reductase that significantly contributes to cellular methylglyoxal detoxification by catalyzing the NADPH-dependent conversion of methylglyoxal to acetol. This Escherichia coli O157:H7 protein is Methylglyoxal reductase DkgA.